A 434-amino-acid chain; its full sequence is Ataxin-10 homolog (434 aa).

Belongs to the ataxin-10 family.

The protein resides in the cytoplasm. The protein localises to the nucleus. May play a role in the regulation of cytokinesis. The sequence is that of Ataxin-10 homolog (mug160) from Schizosaccharomyces pombe (strain 972 / ATCC 24843) (Fission yeast).